Here is a 268-residue protein sequence, read N- to C-terminus: Holocytochrome c-type synthase (268 aa).

Residues 1-22 (MGLSPSAPAVAVQASNASASPP) are compositionally biased toward low complexity. The disordered stretch occupies residues 1 to 25 (MGLSPSAPAVAVQASNASASPPSGC). Gly2 is lipidated: N-myristoyl glycine. HRM repeat units lie at residues 24-29 (GCPMHE) and 34-39 (GCPVNT).

The protein belongs to the cytochrome c-type heme lyase family.

It is found in the mitochondrion inner membrane. The protein localises to the membrane. The enzyme catalyses holo-[cytochrome c] = apo-[cytochrome c] + heme b. Functionally, lyase that catalyzes the covalent linking of the heme group to the cytochrome C apoprotein to produce the mature functional cytochrome. The chain is Holocytochrome c-type synthase from Homo sapiens (Human).